The sequence spans 63 residues: Large ribosomal subunit protein uL29 (63 aa).

Belongs to the universal ribosomal protein uL29 family.

The chain is Large ribosomal subunit protein uL29 from Bdellovibrio bacteriovorus (strain ATCC 15356 / DSM 50701 / NCIMB 9529 / HD100).